The sequence spans 719 residues: Glutamate--tRNA ligase, cytoplasmic (719 aa).

Ser-93 is a binding site for ATP. A disordered region spans residues 176-205; it reads SGKPVAAPKSKDSQQAVKGDGQDKGKPEVD. The span at 195 to 204 shows a compositional bias: basic and acidic residues; that stretch reads DGQDKGKPEV. An L-glutamate-binding site is contributed by 217 to 219; sequence RFA. The 'HIGH' region signature appears at 220 to 230; the sequence is PEPSGYLHIGH. Residue His-227 participates in ATP binding. Residues 393–397 and Arg-411 contribute to the L-glutamate site; that span reads YDFAC. Residues Glu-414 and 448–452 each bind ATP; that span reads LLSKR. Positions 448–452 match the 'KMSKS' region motif; it reads LLSKR.

Belongs to the class-I aminoacyl-tRNA synthetase family. Glutamate--tRNA ligase type 2 subfamily. In terms of assembly, interacts with GLN2, COL4 and RPP13L4/ZAR1.

The protein resides in the cytoplasm. The protein localises to the cytosol. The catalysed reaction is tRNA(Glu) + L-glutamate + ATP = L-glutamyl-tRNA(Glu) + AMP + diphosphate. Its function is as follows. Catalyzes the attachment of glutamate to tRNA(Glu) in a two-step reaction: glutamate is first activated by ATP to form Glu-AMP and then transferred to the acceptor end of tRNA(Glu). The polypeptide is Glutamate--tRNA ligase, cytoplasmic (Arabidopsis thaliana (Mouse-ear cress)).